The following is a 139-amino-acid chain: Ribosomal RNA large subunit methyltransferase H (139 aa).

S-adenosyl-L-methionine is bound by residues Leu-56, Gly-88, and Leu-107–Phe-112.

The protein belongs to the RNA methyltransferase RlmH family. In terms of assembly, homodimer.

Its subcellular location is the cytoplasm. It catalyses the reaction pseudouridine(1915) in 23S rRNA + S-adenosyl-L-methionine = N(3)-methylpseudouridine(1915) in 23S rRNA + S-adenosyl-L-homocysteine + H(+). In terms of biological role, specifically methylates the pseudouridine at position 1915 (m3Psi1915) in 23S rRNA. This is Ribosomal RNA large subunit methyltransferase H from Coprothermobacter proteolyticus (strain ATCC 35245 / DSM 5265 / OCM 4 / BT).